The sequence spans 843 residues: Translation initiation factor IF-2 (843 aa).

The interval Tyr198 to Lys219 is disordered. A compositionally biased stretch (basic residues) spans Ser207–Lys219. The tr-type G domain maps to Ser345 to Glu512. The tract at residues Gly354 to Thr361 is G1. Gly354–Thr361 provides a ligand contact to GTP. The tract at residues Gly379 to His383 is G2. The segment at Asp400 to Gly403 is G3. GTP-binding positions include Asp400 to His404 and Asn454 to Asp457. Positions Asn454–Asp457 are G4. A G5 region spans residues Ser490–Lys492.

The protein belongs to the TRAFAC class translation factor GTPase superfamily. Classic translation factor GTPase family. IF-2 subfamily.

It is found in the cytoplasm. One of the essential components for the initiation of protein synthesis. Protects formylmethionyl-tRNA from spontaneous hydrolysis and promotes its binding to the 30S ribosomal subunits. Also involved in the hydrolysis of GTP during the formation of the 70S ribosomal complex. This chain is Translation initiation factor IF-2, found in Francisella tularensis subsp. tularensis (strain WY96-3418).